We begin with the raw amino-acid sequence, 261 residues long: GTP cyclohydrolase FolE2 (261 aa).

The protein belongs to the GTP cyclohydrolase IV family.

The catalysed reaction is GTP + H2O = 7,8-dihydroneopterin 3'-triphosphate + formate + H(+). It participates in cofactor biosynthesis; 7,8-dihydroneopterin triphosphate biosynthesis; 7,8-dihydroneopterin triphosphate from GTP: step 1/1. Converts GTP to 7,8-dihydroneopterin triphosphate. The protein is GTP cyclohydrolase FolE2 of Herminiimonas arsenicoxydans.